A 294-amino-acid chain; its full sequence is Phosphatidylserine decarboxylase proenzyme (294 aa).

Active-site charge relay system; for autoendoproteolytic cleavage activity residues include Asp92, His149, and Ser252. Ser252 acts as the Schiff-base intermediate with substrate; via pyruvic acid; for decarboxylase activity in catalysis. Ser252 carries the post-translational modification Pyruvic acid (Ser); by autocatalysis.

This sequence belongs to the phosphatidylserine decarboxylase family. PSD-B subfamily. Prokaryotic type I sub-subfamily. Heterodimer of a large membrane-associated beta subunit and a small pyruvoyl-containing alpha subunit. The cofactor is pyruvate. Is synthesized initially as an inactive proenzyme. Formation of the active enzyme involves a self-maturation process in which the active site pyruvoyl group is generated from an internal serine residue via an autocatalytic post-translational modification. Two non-identical subunits are generated from the proenzyme in this reaction, and the pyruvate is formed at the N-terminus of the alpha chain, which is derived from the carboxyl end of the proenzyme. The autoendoproteolytic cleavage occurs by a canonical serine protease mechanism, in which the side chain hydroxyl group of the serine supplies its oxygen atom to form the C-terminus of the beta chain, while the remainder of the serine residue undergoes an oxidative deamination to produce ammonia and the pyruvoyl prosthetic group on the alpha chain. During this reaction, the Ser that is part of the protease active site of the proenzyme becomes the pyruvoyl prosthetic group, which constitutes an essential element of the active site of the mature decarboxylase.

Its subcellular location is the cell membrane. It carries out the reaction a 1,2-diacyl-sn-glycero-3-phospho-L-serine + H(+) = a 1,2-diacyl-sn-glycero-3-phosphoethanolamine + CO2. It participates in phospholipid metabolism; phosphatidylethanolamine biosynthesis; phosphatidylethanolamine from CDP-diacylglycerol: step 2/2. Its function is as follows. Catalyzes the formation of phosphatidylethanolamine (PtdEtn) from phosphatidylserine (PtdSer). The sequence is that of Phosphatidylserine decarboxylase proenzyme from Bordetella avium (strain 197N).